Reading from the N-terminus, the 207-residue chain is Outer-membrane lipoprotein LolB (207 aa).

Residues 1–21 (MPIRKVSLLRLIPLASLVLAA) form the signal peptide. Cys22 carries N-palmitoyl cysteine lipidation. A lipid anchor (S-diacylglycerol cysteine) is attached at Cys22.

This sequence belongs to the LolB family. As to quaternary structure, monomer.

It localises to the cell outer membrane. Functionally, plays a critical role in the incorporation of lipoproteins in the outer membrane after they are released by the LolA protein. The protein is Outer-membrane lipoprotein LolB of Serratia proteamaculans (strain 568).